Reading from the N-terminus, the 172-residue chain is Biogenesis of lysosome-related organelles complex 1 subunit 6 (172 aa).

The segment covering 1–10 (MSVPEPPPPD) has biased composition (pro residues). Disordered stretches follow at residues 1–37 (MSVP…PDEG) and 141–172 (QKRQ…AKRT). Residues 63-167 (DLQRSKRALQ…FEREKQLTAK (105 aa)) are a coiled coil. A compositionally biased stretch (basic and acidic residues) spans 143–164 (RQREELEREQQREKEFEREKQL).

This sequence belongs to the BLOC1S6 family. As to quaternary structure, octamer composed of one copy each BLOC1S1, BLOC1S2, BLOC1S3, BLOC1S4, BLOC1S5, BLOC1S6, DTNBP1/BLOC1S7 and SNAPIN/BLOC1S8. Interacts with SNAP47. Homodimer. Component of the biogenesis of lysosome-related organelles complex 1 (BLOC-1) composed of BLOC1S1, BLOC1S2, BLOC1S3, BLOC1S4, BLOC1S5, BLOC1S6, DTNBP1/BLOC1S7 and SNAPIN/BLOC1S8. Interacts with BLOC1S4, BLOC1S5, DTNBP1/BLOC1S7, F-actin, SNAP25 isoform 1 and STX12. In terms of processing, phosphorylated. As to expression, expressed in liver, kidney and spleen (at protein level). Ubiquitously expressed, with the highest expression levels observed in brain, heart, liver and kidney.

It is found in the cytoplasm. The protein resides in the membrane. Its function is as follows. Component of the BLOC-1 complex, a complex that is required for normal biogenesis of lysosome-related organelles (LRO), such as platelet dense granules and melanosomes. In concert with the AP-3 complex, the BLOC-1 complex is required to target membrane protein cargos into vesicles assembled at cell bodies for delivery into neurites and nerve terminals. The BLOC-1 complex, in association with SNARE proteins, is also proposed to be involved in neurite extension. May play a role in intracellular vesicle trafficking, particularly in the vesicle-docking and fusion process. The chain is Biogenesis of lysosome-related organelles complex 1 subunit 6 (Bloc1s6) from Mus musculus (Mouse).